We begin with the raw amino-acid sequence, 303 residues long: Zinc transporter ZIP9 (303 aa).

A helical membrane pass occupies residues 7–27 (ISLLSLAMLVGCYVSGIIPLA). An N-linked (GlcNAc...) asparagine glycan is attached at asparagine 29. Transmembrane regions (helical) follow at residues 35–55 (LKLV…AVIV), 102–122 (AYIG…DQIG), 142–162 (ITTT…LGAA), 172–192 (LIVF…LVSF), and 206–226 (HLLV…LGLS). Asparagine 237 carries N-linked (GlcNAc...) asparagine glycosylation. 2 helical membrane passes run 240–260 (GVAM…HVLP) and 282–302 (LEVC…IGHQ).

This sequence belongs to the ZIP transporter (TC 2.A.5) family.

It is found in the golgi apparatus. Its subcellular location is the trans-Golgi network membrane. The protein localises to the cell membrane. The protein resides in the cytoplasm. It localises to the perinuclear region. It is found in the mitochondrion. Its subcellular location is the nucleus. It carries out the reaction Zn(2+)(in) = Zn(2+)(out). Its function is as follows. Transports zinc ions across cell and organelle membranes into the cytoplasm and regulates intracellular zinc homeostasis. Participates in the zinc ions efflux out of the secretory compartments. Also functions as a membrane androgen receptor that mediates, through a G protein, the non-classical androgen signaling pathway, characterized by the activation of MAPK3/MAPK1 (Erk1/2) and transcription factors CREB1 or ATF1. Moreover, has dual functions as a membrane-bound androgen receptor and as an androgen-dependent zinc transporter both of which are mediated through an inhibitory G protein (Gi) that mediates both MAP kinase and zinc signaling leading to the androgen-dependent apoptotic process. This chain is Zinc transporter ZIP9, found in Xenopus tropicalis (Western clawed frog).